The primary structure comprises 229 residues: Prolactin (229 aa).

Positions 1–30 are cleaved as a signal peptide; sequence MDKKGWSLKGSLLPLLLLVSDLLLCQSVAS. Residues Cys34 and Cys41 are joined by a disulfide bond. 3 positions are modified to phosphoserine: Ser56, Ser64, and Ser120. Disulfide bonds link Cys88–Cys204 and Cys221–Cys229.

Belongs to the somatotropin/prolactin family. In terms of assembly, interacts with PRLR.

The protein localises to the secreted. Its function is as follows. Prolactin acts primarily on the mammary gland by promoting lactation. The protein is Prolactin (PRL) of Ailuropoda melanoleuca (Giant panda).